A 156-amino-acid chain; its full sequence is SsrA-binding protein (156 aa).

Belongs to the SmpB family.

It localises to the cytoplasm. Required for rescue of stalled ribosomes mediated by trans-translation. Binds to transfer-messenger RNA (tmRNA), required for stable association of tmRNA with ribosomes. tmRNA and SmpB together mimic tRNA shape, replacing the anticodon stem-loop with SmpB. tmRNA is encoded by the ssrA gene; the 2 termini fold to resemble tRNA(Ala) and it encodes a 'tag peptide', a short internal open reading frame. During trans-translation Ala-aminoacylated tmRNA acts like a tRNA, entering the A-site of stalled ribosomes, displacing the stalled mRNA. The ribosome then switches to translate the ORF on the tmRNA; the nascent peptide is terminated with the 'tag peptide' encoded by the tmRNA and targeted for degradation. The ribosome is freed to recommence translation, which seems to be the essential function of trans-translation. This chain is SsrA-binding protein, found in Clostridium beijerinckii (strain ATCC 51743 / NCIMB 8052) (Clostridium acetobutylicum).